We begin with the raw amino-acid sequence, 893 residues long: Major vault protein (893 aa).

Ala2 is subject to N-acetylalanine. MVP repeat units follow at residues 2 to 56 (ATEE…VPPR), 57 to 111 (HYCT…DITP), 112 to 164 (LQVV…EIIQ), 165 to 217 (ATII…DLVD), 218 to 272 (AVIL…GVVP), 273 to 323 (ITTL…IQDV), 324 to 379 (YVLS…ERQA), 380 to 457 (IPLD…KTRV), and 458 to 520 (VSYR…LLGP). Residue Lys444 forms a Glycyl lysine isopeptide (Lys-Gly) (interchain with G-Cter in SUMO2) linkage. Ser445 carries the post-translational modification Phosphoserine. Lys704 is covalently cross-linked (Glycyl lysine isopeptide (Lys-Gly) (interchain with G-Cter in SUMO2)). The disordered stretch occupies residues 856–893 (QPLGRRVASGPSPGEGISPQSAQAPQAPGDNHVVPVLR).

The vault ribonucleoprotein particle is a huge (400 A x 670 A) cage structure of 12.9 MDa. It consists of a dimer of half-vaults, with each half-vault comprising 39 identical major vault protein (MVP) chains, PARP4 and one or more vault RNAs (vRNAs). Interacts with TEP1. Interacts with PTEN and activated MAPK1. The phosphorylated protein interacts with the SH2 domains of PTPN11 and SRC. Interacts with APEX1. May interact with ZNF540. Phosphorylated on Tyr residues after EGF stimulation. In terms of processing, dephosphorylated by PTPN11. In terms of tissue distribution, present in most normal tissues. Higher expression observed in epithelial cells with secretory and excretory functions, as well as in cells chronically exposed to xenobiotics, such as bronchial cells and cells lining the intestine. Overexpressed in many multidrug-resistant cancer cells.

It localises to the cytoplasm. Its subcellular location is the nucleus. The protein resides in the nuclear pore complex. The protein localises to the perinuclear region. Its function is as follows. Required for normal vault structure. Vaults are multi-subunit structures that may act as scaffolds for proteins involved in signal transduction. Vaults may also play a role in nucleo-cytoplasmic transport. Down-regulates IFNG-mediated STAT1 signaling and subsequent activation of JAK. Down-regulates SRC activity and signaling through MAP kinases. The sequence is that of Major vault protein (MVP) from Homo sapiens (Human).